Here is a 690-residue protein sequence, read N- to C-terminus: Molting protein mlt-10 (690 aa).

An N-terminal signal peptide occupies residues 1–18; sequence MRNLNLILFTALAAVTYA. Residues Asn42 and Asn204 are each glycosylated (N-linked (GlcNAc...) asparagine). Residues 219–285 adopt a coiled-coil conformation; it reads IKKLGEEAKR…MRKKEADEIR (67 aa). N-linked (GlcNAc...) asparagine glycosylation is found at Asn305 and Asn415. Helical transmembrane passes span 514-534, 544-564, 579-599, 618-638, and 643-663; these read PFIL…FIVL, LSPA…PLIL, FSPI…PGVF, VFTP…TPMV, and ILSP…FAVV.

The protein belongs to the mlt-10-like family. In terms of tissue distribution, expressed in the major body hypodermal syncytium (Hyp7), the dorsal and ventral ridges of the hypodermis, hypodermal cells in the head and tail, and the pharyngeal myoepithelium, but not the lateral seam cells.

It is found in the membrane. It localises to the secreted. In terms of biological role, required for the efficient removal of larval cuticles during the molting cycle as well as the synthesis of new cuticles. The sequence is that of Molting protein mlt-10 from Caenorhabditis elegans.